The following is a 238-amino-acid chain: MAAANAPFALVSRLSPAARLPIRAWRAARPAPLSTGGRTRPLSVASAAQENRDNSVDVQVSQAQNAGNQQGNAVQRRPRRAGFDISPFGLVDPMSPMRTMRQMLDTMDRLFDDAVGFPTRRSPAARARRRMPWDIMEDEKEVKMRFDMPGLSREEVRVMVEDDALVIRGEHKKEAGEGQGEGGDGWWKERSVSSYDMRLALPDECDKSQVRAELKNGVLLVSVPKRETERKVIDVQVQ.

The disordered stretch occupies residues 31 to 87; that stretch reads APLSTGGRTRPLSVASAAQENRDNSVDVQVSQAQNAGNQQGNAVQRRPRRAGFDISP. Low complexity predominate over residues 58–75; sequence VQVSQAQNAGNQQGNAVQ. The 115-residue stretch at 124-238 folds into the sHSP domain; the sequence is AARARRRMPW…ERKVIDVQVQ (115 aa).

This sequence belongs to the small heat shock protein (HSP20) family.

The protein localises to the plastid. Its subcellular location is the chloroplast. The protein is Small heat shock protein, chloroplastic (HSP21) of Triticum aestivum (Wheat).